The primary structure comprises 481 residues: Argininosuccinate lyase (481 aa).

Belongs to the lyase 1 family. Argininosuccinate lyase subfamily.

Its subcellular location is the cytoplasm. The enzyme catalyses 2-(N(omega)-L-arginino)succinate = fumarate + L-arginine. Its pathway is amino-acid biosynthesis; L-arginine biosynthesis; L-arginine from L-ornithine and carbamoyl phosphate: step 3/3. The chain is Argininosuccinate lyase from Methanococcus maripaludis (strain DSM 14266 / JCM 13030 / NBRC 101832 / S2 / LL).